The following is a 297-amino-acid chain: Protease HtpX homolog (297 aa).

A run of 2 helical transmembrane segments spans residues I14–L34 and Y39–F59. Zn(2+) is bound at residue H143. The active site involves E144. H147 provides a ligand contact to Zn(2+). 2 helical membrane-spanning segments follow: residues I153–G173 and I196–V216. Residue E225 coordinates Zn(2+).

This sequence belongs to the peptidase M48B family. It depends on Zn(2+) as a cofactor.

It is found in the cell membrane. This chain is Protease HtpX homolog, found in Streptococcus uberis (strain ATCC BAA-854 / 0140J).